A 264-amino-acid polypeptide reads, in one-letter code: Cell division protein DivIB (264 aa).

Residues 1 to 23 lie on the Cytoplasmic side of the membrane; the sequence is MAVYEERIPQVKQQRPRRRGNRK. The chain crosses the membrane as a helical span at residues 24–44; it reads LVFLLVLFFLTILIIVFIRSP. At 45-264 the chain is on the extracellular side; that stretch reads YSKVQEIRVT…GQEQPQQPQQ (220 aa). Residues 46 to 114 enclose the POTRA domain; that stretch reads SKVQEIRVTG…GLITLHITEQ (69 aa).

This sequence belongs to the FtsQ/DivIB family. DivIB subfamily.

The protein resides in the cell membrane. Functionally, cell division protein that may be involved in stabilizing or promoting the assembly of the division complex. In Brevibacillus brevis (strain 47 / JCM 6285 / NBRC 100599), this protein is Cell division protein DivIB.